Reading from the N-terminus, the 90-residue chain is Cell division topological specificity factor (90 aa).

The disordered stretch occupies residues 1–21; it reads MAGFWSKLFSSEEKPSSAQTA. Basic and acidic residues predominate over residues 10–21; the sequence is SSEEKPSSAQTA.

This sequence belongs to the MinE family.

In terms of biological role, prevents the cell division inhibition by proteins MinC and MinD at internal division sites while permitting inhibition at polar sites. This ensures cell division at the proper site by restricting the formation of a division septum at the midpoint of the long axis of the cell. The sequence is that of Cell division topological specificity factor from Acinetobacter baumannii (strain AB307-0294).